Here is a 253-residue protein sequence, read N- to C-terminus: Imidazole glycerol phosphate synthase subunit HisF (253 aa).

Active-site residues include Asp11 and Asp130.

The protein belongs to the HisA/HisF family. In terms of assembly, heterodimer of HisH and HisF.

Its subcellular location is the cytoplasm. It catalyses the reaction 5-[(5-phospho-1-deoxy-D-ribulos-1-ylimino)methylamino]-1-(5-phospho-beta-D-ribosyl)imidazole-4-carboxamide + L-glutamine = D-erythro-1-(imidazol-4-yl)glycerol 3-phosphate + 5-amino-1-(5-phospho-beta-D-ribosyl)imidazole-4-carboxamide + L-glutamate + H(+). It functions in the pathway amino-acid biosynthesis; L-histidine biosynthesis; L-histidine from 5-phospho-alpha-D-ribose 1-diphosphate: step 5/9. Its function is as follows. IGPS catalyzes the conversion of PRFAR and glutamine to IGP, AICAR and glutamate. The HisF subunit catalyzes the cyclization activity that produces IGP and AICAR from PRFAR using the ammonia provided by the HisH subunit. In Thermotoga sp. (strain RQ2), this protein is Imidazole glycerol phosphate synthase subunit HisF.